A 1131-amino-acid polypeptide reads, in one-letter code: Protein DWARF 53 (1131 aa).

The region spanning 8 to 181 (ARQCLSPAAV…KLAILRPAPP (174 aa)) is the Clp R domain. 2 repeat regions span residues 12-85 (LSPA…LDRL) and 103-181 (VSNS…PAPP). The interval 511 to 574 (NRDPYKPFPR…ISSPSVTNKR (64 aa)) is disordered. Low complexity predominate over residues 558 to 569 (SSSTARPISSPS). The EAR 1 signature appears at 578–582 (LVLNL). The interval 588–655 (KSDENLQERG…KRVEDSERSV (68 aa)) is disordered. Over residues 597–609 (GMQSQHGTLSNVD) the composition is skewed to polar residues. Basic and acidic residues predominate over residues 646–655 (KRVEDSERSV). The short motif at 799-803 (LDLNL) is the EAR 2 element. Disordered regions lie at residues 951–970 (ISDDQEKLQESPSSSKRLHR) and 976–1002 (FDLNLPVDEDEPLDADDDSSSHENSYG). Positions 976 to 981 (FDLNLP) match the EAR 3 motif. Over residues 982-993 (VDEDEPLDADDD) the composition is skewed to acidic residues.

The protein belongs to the ClpA/ClpB family. In terms of assembly, interacts with D3. Interacts with D14. The interaction with D14 is enhanced in the presence of strigolactones. The interaction with D14 occurs in the presence of (2'R) stereoisomers of strigolactones, but not (2'S) stereoisomers. Interacts with the TOPLESS-related proteins TPR1, TPR2 and TPR3. Interacts with SPL14/IPA1. Polyubiquitinated. Strigolactone, but not karrikin, triggers rapid SCF(D3)-dependent degradation via the proteasome. As to expression, expressed in the shoot bases of seedlings, young leaves, axillary buds and young panicles. Expressed in young roots vasculature, culms, internodes and nodes, preferentially in the parenchyma cells surrounding the xylem.

The protein localises to the nucleus. In terms of biological role, repressor of strigolactones (SL) signaling. Subjected to a negative feedback control of SL signaling. Suppresses the transcriptional activation activity of SPL14/IPA1 in SL signaling. Acts with SPL14/IPA1 to mediate the SL-regulated tiller development. Subject to a negative feedback regulation by SPL14/IPA1, which binds to D53 promoter to repress D53 gene expression. The sequence is that of Protein DWARF 53 from Oryza sativa subsp. japonica (Rice).